The sequence spans 474 residues: Adenosylhomocysteinase (474 aa).

Thr-53, Asp-135, and Glu-197 together coordinate substrate. 198–200 (TTT) is a binding site for NAD(+). Lys-227 and Asp-231 together coordinate substrate. NAD(+) is bound by residues Asn-232, 261 to 266 (GYGDVG), Glu-284, Asn-319, 340 to 342 (IGH), and Asn-388.

Belongs to the adenosylhomocysteinase family. NAD(+) is required as a cofactor.

The protein localises to the cytoplasm. The enzyme catalyses S-adenosyl-L-homocysteine + H2O = L-homocysteine + adenosine. It participates in amino-acid biosynthesis; L-homocysteine biosynthesis; L-homocysteine from S-adenosyl-L-homocysteine: step 1/1. May play a key role in the regulation of the intracellular concentration of adenosylhomocysteine. The polypeptide is Adenosylhomocysteinase (Corynebacterium glutamicum (strain ATCC 13032 / DSM 20300 / JCM 1318 / BCRC 11384 / CCUG 27702 / LMG 3730 / NBRC 12168 / NCIMB 10025 / NRRL B-2784 / 534)).